A 429-amino-acid polypeptide reads, in one-letter code: Glutamate-1-semialdehyde 2,1-aminomutase (429 aa).

Lysine 267 carries the post-translational modification N6-(pyridoxal phosphate)lysine.

It belongs to the class-III pyridoxal-phosphate-dependent aminotransferase family. HemL subfamily. In terms of assembly, homodimer. The cofactor is pyridoxal 5'-phosphate.

The protein resides in the cytoplasm. It catalyses the reaction (S)-4-amino-5-oxopentanoate = 5-aminolevulinate. It functions in the pathway porphyrin-containing compound metabolism; protoporphyrin-IX biosynthesis; 5-aminolevulinate from L-glutamyl-tRNA(Glu): step 2/2. The chain is Glutamate-1-semialdehyde 2,1-aminomutase from Xanthomonas oryzae pv. oryzae (strain PXO99A).